A 261-amino-acid chain; its full sequence is Putative methyltransferase MJ0046 (261 aa).

This sequence belongs to the methyltransferase superfamily.

This chain is Putative methyltransferase MJ0046, found in Methanocaldococcus jannaschii (strain ATCC 43067 / DSM 2661 / JAL-1 / JCM 10045 / NBRC 100440) (Methanococcus jannaschii).